Here is a 358-residue protein sequence, read N- to C-terminus: Mannonate dehydratase (358 aa).

It belongs to the mannonate dehydratase family. Fe(2+) serves as cofactor. Requires Mn(2+) as cofactor.

It catalyses the reaction D-mannonate = 2-dehydro-3-deoxy-D-gluconate + H2O. It functions in the pathway carbohydrate metabolism; pentose and glucuronate interconversion. Catalyzes the dehydration of D-mannonate. The protein is Mannonate dehydratase of Lachnoclostridium phytofermentans (strain ATCC 700394 / DSM 18823 / ISDg) (Clostridium phytofermentans).